A 367-amino-acid polypeptide reads, in one-letter code: 4-hydroxyphenylpyruvate dioxygenase (367 aa).

2 consecutive VOC domains span residues 3–135 (GFDH…FVDR) and 166–324 (LIDH…IFTN). Fe cation is bound by residues H169, H252, and E335.

The protein belongs to the 4HPPD family. The cofactor is Fe cation.

The catalysed reaction is 3-(4-hydroxyphenyl)pyruvate + O2 = homogentisate + CO2. Its pathway is amino-acid degradation; L-phenylalanine degradation; acetoacetate and fumarate from L-phenylalanine: step 3/6. In terms of biological role, key enzyme in the degradation of tyrosine. This Dictyostelium discoideum (Social amoeba) protein is 4-hydroxyphenylpyruvate dioxygenase (hpd).